The primary structure comprises 88 residues: HssA/B-like protein 61 (88 aa).

Belongs to the hssA/B family.

This Dictyostelium discoideum (Social amoeba) protein is HssA/B-like protein 61 (hssl61).